The chain runs to 89 residues: Porphobilinogen deaminase (89 aa).

Belongs to the HMBS family. In terms of assembly, monomer. Requires dipyrromethane as cofactor.

The catalysed reaction is 4 porphobilinogen + H2O = hydroxymethylbilane + 4 NH4(+). Its pathway is porphyrin-containing compound metabolism; protoporphyrin-IX biosynthesis; coproporphyrinogen-III from 5-aminolevulinate: step 2/4. Its function is as follows. Tetrapolymerization of the monopyrrole PBG into the hydroxymethylbilane pre-uroporphyrinogen in several discrete steps. In Dickeya chrysanthemi (Pectobacterium chrysanthemi), this protein is Porphobilinogen deaminase (hemC).